A 56-amino-acid chain; its full sequence is Zinc finger mu-protein HVO_0758 (56 aa).

Zn(2+) is bound by residues C23, C26, C45, and C48. 2 short sequence motifs (c(P)XCG motif) span residues 23-27 (CSECG) and 45-49 (CADCG).

In terms of assembly, monomer.

Zinc-binding protein that binds one zinc ion. Is involved in biofilm formation, swarming and glycerol metabolism regulation. In Haloferax volcanii (strain ATCC 29605 / DSM 3757 / JCM 8879 / NBRC 14742 / NCIMB 2012 / VKM B-1768 / DS2) (Halobacterium volcanii), this protein is Zinc finger mu-protein HVO_0758.